We begin with the raw amino-acid sequence, 302 residues long: Nucleotide-binding protein Bcep18194_A6125 (302 aa).

Residue 8–15 (GISGSGKS) participates in ATP binding. 57 to 60 (DARS) contributes to the GTP binding site.

The protein belongs to the RapZ-like family.

Functionally, displays ATPase and GTPase activities. In Burkholderia lata (strain ATCC 17760 / DSM 23089 / LMG 22485 / NCIMB 9086 / R18194 / 383), this protein is Nucleotide-binding protein Bcep18194_A6125.